The primary structure comprises 322 residues: Short chain dehydrogenase AOL_s00215g274 (322 aa).

NAD(+) is bound by residues 47 to 48, 104 to 106, 197 to 201, and 230 to 232; these read AV, IAV, YNVSK, and VAT. Y197 functions as the Proton acceptor in the catalytic mechanism.

Belongs to the short-chain dehydrogenases/reductases (SDR) family.

The protein operates within secondary metabolite biosynthesis; terpenoid biosynthesis. Functionally, short chain dehydrogenase; part of the gene cluster that mediates the biosynthesis of sesquiterpenyl epoxy-cyclohexenoids (SECs) such as anthrobotrisins and arthrosporols, metabolites that possess a novel hybrid carbon skeleton consisting of a polyketide-derived epoxycyclohexenol combined with a terpenoid-derived monocyclic sesquiterpenol substructure (PKS-PTS hybrid). The SEC pathway plays an important role for fungal soil colonization via decreasing fungal nematode-capturing ability. Within the pathway, the cytochrome P450 monooxygenase AOL_s00215g274 is involved in specific regional ketone reductions at C-4 of farnesyl epoxy-quinone. The pathway begins with the biosynthesis of 6-methylsalicylic acid (6-MSA), the first precursor of the polyketide-derived epoxycyclohexenol in arthrosporols, by the polyketide synthase (PKS) AOL_s00215g283 via condensation of 1 acetate and 3 malonate units. The 6-methylsalicylic acid decarboxylase AOL_s00215g281 then catalyzes the decarboxylation of 6-methylsalicylic acid to yield m-cresol. The cytochrome P450 monooxygenase AOL_s00215g282 further oxidizes m-cresol to yield toluquinol. With the assistance of the oxidoreductase AOL_s00215g277, the polyprenyl transferase AOL_s00215g276 catalyzes the farnesylation of toluquinol to produce farnesyl hydroquinone, the hybrid precursor for biosynthesis of SECs. Farnesyl hydroquinone undergoes epoxidation and then subsequent dehydrogenation to form farnesyl epoxy-quinone, the first and simplest SEC. The cytochrome P450 monooxygenase AOL_s00215g278 and the FAD-dependent monooxygenase AOL_s00215g279 might be involved in the oxygenation of the phenol moiety, most likely in the epoxy formation. The cytochrome P450 monooxygenases AOL_s00215g274 and AOL_s00215g280 are involved in specific regional ketone reductions at respectively C-4 and C-1 of farnesyl epoxy-quinone PubMed:33823587. The polypeptide is Short chain dehydrogenase AOL_s00215g274 (Arthrobotrys oligospora (strain ATCC 24927 / CBS 115.81 / DSM 1491) (Nematode-trapping fungus)).